The sequence spans 338 residues: MATQHPIGKKTACVVGGTGFVASLLVKLLLQKGYAVNTTVRDPDNQKKVSHLLELQELGDLKIFRADLTDELSFEAPIAGCDFVFHVATPVHFASEDPENDMIKPAVQGVVNVMKACTRAKSVKRVILTSSAAAVTINQLDGTGLVVDEKNWTDIEFLTSAKPPTWGYPASKTLAEKAAWKFAEENNIDLITVIPTLMAGSSLTSDVPSSIGLAMSLITGNEFLINGMKGMQMLSGSVSIAHVEDVCRAHIFVAEKESASGRYICCAANTSVPELAKFLSKRYPQYKVPTDFGDFPSKSKLIISSDKLVKEGFSFKYGIEEIYDESVEYFKAKGLLQN.

NADP(+) is bound by residues 18–21 (TGFV), Lys-48, 87–90 (VATP), and Tyr-168.

It belongs to the NAD(P)-dependent epimerase/dehydratase family. Dihydroflavonol-4-reductase subfamily.

It catalyses the reaction a (2S,3R)-flavan-3-ol + 2 NADP(+) = an anthocyanidin with a 3-hydroxy group + 2 NADPH + 2 H(+). The catalysed reaction is a (2S,3S)-flavan-3-ol + 2 NADP(+) = an anthocyanidin with a 3-hydroxy group + 2 NADPH + 2 H(+). It participates in secondary metabolite biosynthesis; flavonoid biosynthesis. Its function is as follows. Produces the terminal flavan-3-ol monomers required for the formation of proanthocyanidins or condensed tannins in leaves and flowers, as well as in the skin and seeds of developing berries. Behaves as a reductase and as a C-3 epimerase. Catalyzes the double reduction of anthocyanidins, producing a mixture of (2S,3S)- and (2S,3R)-flavan-3-ols. The enzyme catalyzes sequential hydride transfers to C-2 and C-4, respectively and epimerization at C-3 is achieved by tautomerization that occurs between the two hydride transfers. Converts cyanidin, pelargonidin and delphinidin into catechin and epicatechin, afzelechin and epiafzelechin, and gallocatechin and epigallocatechin respectively. The sequence is that of Anthocyanidin reductase ((2S)-flavan-3-ol-forming) from Vitis vinifera (Grape).